Consider the following 105-residue polypeptide: Pyrimidine/purine nucleoside phosphorylase (105 aa).

This sequence belongs to the nucleoside phosphorylase PpnP family.

The catalysed reaction is a purine D-ribonucleoside + phosphate = a purine nucleobase + alpha-D-ribose 1-phosphate. It carries out the reaction adenosine + phosphate = alpha-D-ribose 1-phosphate + adenine. The enzyme catalyses cytidine + phosphate = cytosine + alpha-D-ribose 1-phosphate. It catalyses the reaction guanosine + phosphate = alpha-D-ribose 1-phosphate + guanine. The catalysed reaction is inosine + phosphate = alpha-D-ribose 1-phosphate + hypoxanthine. It carries out the reaction thymidine + phosphate = 2-deoxy-alpha-D-ribose 1-phosphate + thymine. The enzyme catalyses uridine + phosphate = alpha-D-ribose 1-phosphate + uracil. It catalyses the reaction xanthosine + phosphate = alpha-D-ribose 1-phosphate + xanthine. Catalyzes the phosphorolysis of diverse nucleosides, yielding D-ribose 1-phosphate and the respective free bases. Can use uridine, adenosine, guanosine, cytidine, thymidine, inosine and xanthosine as substrates. Also catalyzes the reverse reactions. The sequence is that of Pyrimidine/purine nucleoside phosphorylase from Ralstonia nicotianae (strain ATCC BAA-1114 / GMI1000) (Ralstonia solanacearum).